The following is a 166-amino-acid chain: Large ribosomal subunit protein uL10 (166 aa).

This sequence belongs to the universal ribosomal protein uL10 family. In terms of assembly, part of the ribosomal stalk of the 50S ribosomal subunit. The N-terminus interacts with L11 and the large rRNA to form the base of the stalk. The C-terminus forms an elongated spine to which L12 dimers bind in a sequential fashion forming a multimeric L10(L12)X complex.

Forms part of the ribosomal stalk, playing a central role in the interaction of the ribosome with GTP-bound translation factors. The polypeptide is Large ribosomal subunit protein uL10 (Marinomonas sp. (strain MWYL1)).